Reading from the N-terminus, the 463-residue chain is Aurantioclavine synthase cnsA (463 aa).

The region spanning E16 to D199 is the FAD-binding PCMH-type domain.

Belongs to the oxygen-dependent FAD-linked oxidoreductase family. FAD is required as a cofactor.

It participates in alkaloid biosynthesis. Functionally, FAD-linked oxidoreductase; part of the gene cluster that mediates the biosynthesis of communesins, a prominent class of indole alkaloids with great potential as pharmaceuticals. Communesins are biosynthesized by the coupling of tryptamine and aurantioclavine, two building blocks derived from L-tryptophan. The L-tryptophan decarboxylase cnsB converts L-tryptophan to tryptamine, whereas the tryptophan dimethylallyltransferase cnsF converts L-tryptophan to 4-dimethylallyl tryptophan which is further transformed to aurantioclavine by the aurantioclavine synthase cnsA, probably aided by the catalase cnsD. The cytochrome P450 monooxygenase cnsC catalyzes the heterodimeric coupling between the two different indole moieties, tryptamine and aurantioclavine, to construct vicinal quaternary stereocenters and yield the heptacyclic communesin scaffold. The O-methyltransferase cnsE then methylates the communesin scaffold to produce communesin K, the simplest characterized communesin that contains the heptacyclic core. The dioxygenase cnsJ converts communesin K into communesin I. Acylation to introduce the hexadienyl group at position N16 of communesin I by the acyltransferase cnsK leads to the production of communesin B. The hexadienyl group is produced by the highly reducing polyketide synthase cnsI, before being hydrolytically removed from cnsI by the serine hydrolase cnsH, converted into hexadienyl-CoA by the CoA ligase cnsG, and then transferred to communesin I by cnsK. Surprisingly, cnsK may also be a promiscuous acyltransferase that can tolerate a range of acyl groups, including acetyl-, propionyl-, and butyryl-CoA, which lead to communesins A, G and H respectively. The roles of the alpha-ketoglutarate-dependent dioxygenases cnsM and cnsP have still to be determined. This chain is Aurantioclavine synthase cnsA, found in Penicillium expansum (Blue mold rot fungus).